Reading from the N-terminus, the 327-residue chain is Ribonucleoside-diphosphate reductase small chain (327 aa).

Residues Asp70, Glu101, and His104 each contribute to the Fe cation site. Tyr108 is an active-site residue. Residues Glu164, Glu198, and His201 each contribute to the Fe cation site.

The protein belongs to the ribonucleoside diphosphate reductase small chain family. Heterotetramer composed of a homodimer of the large subunit (R1) and a homodimer of the small subunit (R2). Larger multisubunit protein complex are also active, composed of (R1)n(R2)n. The cofactor is Fe cation.

The catalysed reaction is a 2'-deoxyribonucleoside 5'-diphosphate + [thioredoxin]-disulfide + H2O = a ribonucleoside 5'-diphosphate + [thioredoxin]-dithiol. Functionally, ribonucleoside-diphosphate reductase holoenzyme provides the precursors necessary for viral DNA synthesis. Allows virus growth in non-dividing cells. Catalyzes the biosynthesis of deoxyribonucleotides from the corresponding ribonucleotides. This Ornithodoros (relapsing fever ticks) protein is Ribonucleoside-diphosphate reductase small chain.